Consider the following 433-residue polypeptide: Serine hydroxymethyltransferase (433 aa).

Residues Leu-132 and 136–138 each bind (6S)-5,6,7,8-tetrahydrofolate; that span reads GHL. Lys-241 carries the N6-(pyridoxal phosphate)lysine modification.

Belongs to the SHMT family. As to quaternary structure, homodimer. The cofactor is pyridoxal 5'-phosphate.

Its subcellular location is the cytoplasm. The catalysed reaction is (6R)-5,10-methylene-5,6,7,8-tetrahydrofolate + glycine + H2O = (6S)-5,6,7,8-tetrahydrofolate + L-serine. It participates in one-carbon metabolism; tetrahydrofolate interconversion. The protein operates within amino-acid biosynthesis; glycine biosynthesis; glycine from L-serine: step 1/1. Functionally, catalyzes the reversible interconversion of serine and glycine with tetrahydrofolate (THF) serving as the one-carbon carrier. This reaction serves as the major source of one-carbon groups required for the biosynthesis of purines, thymidylate, methionine, and other important biomolecules. Also exhibits THF-independent aldolase activity toward beta-hydroxyamino acids, producing glycine and aldehydes, via a retro-aldol mechanism. In Afipia carboxidovorans (strain ATCC 49405 / DSM 1227 / KCTC 32145 / OM5) (Oligotropha carboxidovorans), this protein is Serine hydroxymethyltransferase.